Here is a 190-residue protein sequence, read N- to C-terminus: Holliday junction branch migration complex subunit RuvA (190 aa).

The domain I stretch occupies residues 1–64 (MIGRITGTLI…EDAQLLYGFG (64 aa)). The domain II stretch occupies residues 65 to 137 (SSAERSTFRE…MRGKLGADIG (73 aa)). A flexible linker region spans residues 137-141 (GATPH). Residues 142-190 (AAGGHQSDILNALLALGYSDKESQAALKKLPEGVDVSEGIRLALKALVR) are domain III.

It belongs to the RuvA family. Homotetramer. Forms an RuvA(8)-RuvB(12)-Holliday junction (HJ) complex. HJ DNA is sandwiched between 2 RuvA tetramers; dsDNA enters through RuvA and exits via RuvB. An RuvB hexamer assembles on each DNA strand where it exits the tetramer. Each RuvB hexamer is contacted by two RuvA subunits (via domain III) on 2 adjacent RuvB subunits; this complex drives branch migration. In the full resolvosome a probable DNA-RuvA(4)-RuvB(12)-RuvC(2) complex forms which resolves the HJ.

Its subcellular location is the cytoplasm. Functionally, the RuvA-RuvB-RuvC complex processes Holliday junction (HJ) DNA during genetic recombination and DNA repair, while the RuvA-RuvB complex plays an important role in the rescue of blocked DNA replication forks via replication fork reversal (RFR). RuvA specifically binds to HJ cruciform DNA, conferring on it an open structure. The RuvB hexamer acts as an ATP-dependent pump, pulling dsDNA into and through the RuvAB complex. HJ branch migration allows RuvC to scan DNA until it finds its consensus sequence, where it cleaves and resolves the cruciform DNA. The chain is Holliday junction branch migration complex subunit RuvA from Bordetella parapertussis (strain 12822 / ATCC BAA-587 / NCTC 13253).